A 170-amino-acid chain; its full sequence is E1B protein, small T-antigen (170 aa).

A disordered region spans residues 137 to 170; the sequence is PAQPPHGLDPVREEEEEEEEEENLRAGLDPQTEL. The segment covering 148–158 has biased composition (acidic residues); sequence REEEEEEEEEE.

This sequence belongs to the adenoviridae E1B 19 kDa protein family.

Its subcellular location is the host cell membrane. The protein resides in the host nucleus envelope. It localises to the host nucleus lamina. Putative adenovirus Bcl-2 homolog that inhibits apoptosis induced by TNF or FAS pathways, as well as p53-mediated apoptosis. Without E1B 19K function, virus production is compromised because of premature death of host cell. Interacts with Bax protein in cell lysates. This chain is E1B protein, small T-antigen, found in Homo sapiens (Human).